Consider the following 358-residue polypeptide: UDP-N-acetylglucosamine--N-acetylmuramyl-(pentapeptide) pyrophosphoryl-undecaprenol N-acetylglucosamine transferase (358 aa).

UDP-N-acetyl-alpha-D-glucosamine-binding residues include Ser197 and Gln288.

It belongs to the glycosyltransferase 28 family. MurG subfamily.

It localises to the cell membrane. The catalysed reaction is Mur2Ac(oyl-L-Ala-gamma-D-Glu-L-Lys-D-Ala-D-Ala)-di-trans,octa-cis-undecaprenyl diphosphate + UDP-N-acetyl-alpha-D-glucosamine = beta-D-GlcNAc-(1-&gt;4)-Mur2Ac(oyl-L-Ala-gamma-D-Glu-L-Lys-D-Ala-D-Ala)-di-trans,octa-cis-undecaprenyl diphosphate + UDP + H(+). Its pathway is cell wall biogenesis; peptidoglycan biosynthesis. Its function is as follows. Cell wall formation. Catalyzes the transfer of a GlcNAc subunit on undecaprenyl-pyrophosphoryl-MurNAc-pentapeptide (lipid intermediate I) to form undecaprenyl-pyrophosphoryl-MurNAc-(pentapeptide)GlcNAc (lipid intermediate II). This chain is UDP-N-acetylglucosamine--N-acetylmuramyl-(pentapeptide) pyrophosphoryl-undecaprenol N-acetylglucosamine transferase, found in Streptococcus agalactiae serotype Ia (strain ATCC 27591 / A909 / CDC SS700).